The following is a 353-amino-acid chain: Ferrochelatase (353 aa).

Positions 223 and 304 each coordinate Fe cation.

Belongs to the ferrochelatase family.

It localises to the cytoplasm. The enzyme catalyses heme b + 2 H(+) = protoporphyrin IX + Fe(2+). It functions in the pathway porphyrin-containing compound metabolism; protoheme biosynthesis; protoheme from protoporphyrin-IX: step 1/1. In terms of biological role, catalyzes the ferrous insertion into protoporphyrin IX. This chain is Ferrochelatase, found in Mesorhizobium japonicum (strain LMG 29417 / CECT 9101 / MAFF 303099) (Mesorhizobium loti (strain MAFF 303099)).